The following is a 125-amino-acid chain: MTEVMQVYKCMVCGNIVEVVHAGRGQLVCCGQPMKLMEVKTTDEGKEKHVPVIEREGNKVYVKVGSVAHPMEEQHYIEWIEVIDDGCVHRKQLKPGDEPKAEFTVMSDRVSARAYCNIHGLWQSG.

Residues cysteine 10, cysteine 13, cysteine 29, cysteine 30, histidine 49, histidine 69, histidine 75, cysteine 116, and histidine 119 each contribute to the Fe cation site.

The protein belongs to the desulfoferrodoxin family. The cofactor is Fe(3+). Cu(2+) serves as cofactor.

This Archaeoglobus fulgidus (strain ATCC 49558 / DSM 4304 / JCM 9628 / NBRC 100126 / VC-16) protein is Desulfoferrodoxin homolog.